The primary structure comprises 1476 residues: ABC-type transporter FG02316 (1476 aa).

N2 is a glycosylation site (N-linked (GlcNAc...) asparagine). 10 consecutive transmembrane segments (helical) span residues 23-43 (FTLL…LLLA), 64-84 (WLYC…AFLV), 97-117 (SLPA…LSYV), 156-176 (AAIT…AETI), 266-286 (ILFI…QPFL), 305-325 (QGYG…VTTG), 384-404 (VWAN…QLGL), 407-427 (LIPV…VSFV), 485-505 (LLIW…VLSF), and 532-552 (LFAL…SFMG). The ABC transmembrane type-1 1 domain occupies 274-552 (LCFIGFTFCQ…FVTSLSSFMG (279 aa)). A disordered region spans residues 586 to 615 (ISGVSSSEEKHPVSPIQESMMKTEPSGDSP). The 226-residue stretch at 622 to 847 (IRNASFGYDR…SDNYVSHSDV (226 aa)) folds into the ABC transporter 1 domain. N624 carries an N-linked (GlcNAc...) asparagine glycan. 654-661 (GPVGSGKS) contacts ATP. 4 N-linked (GlcNAc...) asparagine glycosylation sites follow: N682, N696, N798, and N836. The tract at residues 842–870 (VSHSDVSSPDGARSKAPSSGPASSSAPVP) is disordered. Over residues 855–870 (SKAPSSGPASSSAPVP) the composition is skewed to low complexity. 6 helical membrane-spanning segments follow: residues 906 to 926 (MNAI…AYIF), 950 to 970 (LGYY…FLVL), 1021 to 1041 (LIDM…VLCI), 1045 to 1065 (ILIA…LATL), 1137 to 1157 (WLTL…VVLV), and 1167 to 1187 (GLIG…KLLM). Residues 916-1195 (VFVLAICAYI…LMTFWTTLET (280 aa)) form the ABC transmembrane type-1 2 domain. The ABC transporter 2 domain occupies 1232–1464 (ILFDQVSAGY…GPDASTFASM (233 aa)). N1250 carries an N-linked (GlcNAc...) asparagine glycan. ATP is bound at residue 1265–1272 (GRTGSGKS). N1414 carries an N-linked (GlcNAc...) asparagine glycan.

The protein belongs to the ABC transporter superfamily. ABCC family. Conjugate transporter (TC 3.A.1.208) subfamily.

The protein localises to the cell membrane. Functionally, ABC-type transporter; part of the gene cluster that mediates the biosynthesis of the fusahexin, a cyclic hydrophobic hexapeptide with the amino acid sequence cyclo-(D-Ala-L-Leu-D-allo-Thr-L-Pro-D-Leu-L-Leu) that plays an important role in cell surface hydrophobicity. The sequence is that of ABC-type transporter FG02316 from Gibberella zeae (strain ATCC MYA-4620 / CBS 123657 / FGSC 9075 / NRRL 31084 / PH-1) (Wheat head blight fungus).